Reading from the N-terminus, the 316-residue chain is Methionyl-tRNA formyltransferase (316 aa).

112-115 is a (6S)-5,6,7,8-tetrahydrofolate binding site; the sequence is SLLP.

This sequence belongs to the Fmt family.

The enzyme catalyses L-methionyl-tRNA(fMet) + (6R)-10-formyltetrahydrofolate = N-formyl-L-methionyl-tRNA(fMet) + (6S)-5,6,7,8-tetrahydrofolate + H(+). In terms of biological role, attaches a formyl group to the free amino group of methionyl-tRNA(fMet). The formyl group appears to play a dual role in the initiator identity of N-formylmethionyl-tRNA by promoting its recognition by IF2 and preventing the misappropriation of this tRNA by the elongation apparatus. This is Methionyl-tRNA formyltransferase from Actinobacillus pleuropneumoniae serotype 7 (strain AP76).